Reading from the N-terminus, the 107-residue chain is Large ribosomal subunit protein P1 (107 aa).

The segment covering proline 68–proline 82 has biased composition (low complexity). Residues proline 68–aspartate 107 are disordered. Over residues lysine 90–methionine 101 the composition is skewed to acidic residues.

The protein belongs to the eukaryotic ribosomal protein P1/P2 family. In terms of assembly, P1 and P2 exist as dimers at the large ribosomal subunit.

It is found in the cytoplasm. Plays an important role in the elongation step of protein synthesis. The protein is Large ribosomal subunit protein P1 of Penicillium brevicompactum.